Consider the following 95-residue polypeptide: Phosphoribosyl-ATP pyrophosphatase (95 aa).

The protein belongs to the PRA-PH family.

The protein resides in the cytoplasm. It catalyses the reaction 1-(5-phospho-beta-D-ribosyl)-ATP + H2O = 1-(5-phospho-beta-D-ribosyl)-5'-AMP + diphosphate + H(+). It functions in the pathway amino-acid biosynthesis; L-histidine biosynthesis; L-histidine from 5-phospho-alpha-D-ribose 1-diphosphate: step 2/9. The sequence is that of Phosphoribosyl-ATP pyrophosphatase from Methanosphaera stadtmanae (strain ATCC 43021 / DSM 3091 / JCM 11832 / MCB-3).